Reading from the N-terminus, the 681-residue chain is Macrolide export ATP-binding/permease protein MacB (681 aa).

The ABC transporter domain maps to 6–244 (LKLAAVTRRF…FAEVGVGAAA (239 aa)). 42-49 (GASGSGKS) lines the ATP pocket. A disordered region spans residues 246-274 (TETAADTRSAPASGDAPPPANNDTAADPA). A run of 4 helical transmembrane segments spans residues 306-326 (LLTMLGIIIGITSVVSIVAVG), 554-574 (LTLLLSLIAVISLVVGGIGVM), 611-631 (LVCLLGGTIGIALSFGLGALF), and 644-664 (AGAIVTAFVCSTLTGVIFGFM).

This sequence belongs to the ABC transporter superfamily. Macrolide exporter (TC 3.A.1.122) family. As to quaternary structure, homodimer.

The protein localises to the cell inner membrane. In terms of biological role, non-canonical ABC transporter that contains transmembrane domains (TMD), which form a pore in the inner membrane, and an ATP-binding domain (NBD), which is responsible for energy generation. Confers resistance against macrolides. This is Macrolide export ATP-binding/permease protein MacB from Burkholderia cenocepacia (strain HI2424).